Reading from the N-terminus, the 117-residue chain is Ubiquitin-like protein 3 (117 aa).

Positions 10-88 (INLRLILVSG…PFGKTTVMHL (79 aa)) constitute a Ubiquitin-like domain. Residue C113 is the site of S-palmitoyl cysteine attachment. C114 bears the Cysteine methyl ester mark. A lipid anchor (S-geranylgeranyl cysteine) is attached at C114. Positions 115–117 (VIL) are cleaved as a propeptide — removed in mature form.

The protein localises to the cell membrane. The sequence is that of Ubiquitin-like protein 3 (UBL3) from Bos taurus (Bovine).